A 456-amino-acid polypeptide reads, in one-letter code: UDP-glycosyltransferase 84B1 (456 aa).

UDP-alpha-D-glucose is bound by residues Ser-278, 332–334 (SPQ), 349–357 (HCGWNSTME), and 371–374 (WTDQ).

It belongs to the UDP-glycosyltransferase family.

Its function is as follows. Possesses low quercetin 7-O-glucosyltransferase activity in vitro. This Arabidopsis thaliana (Mouse-ear cress) protein is UDP-glycosyltransferase 84B1 (UGT84B1).